The chain runs to 285 residues: 2-dehydro-3-deoxyphosphooctonate aldolase (285 aa).

It belongs to the KdsA family.

It is found in the cytoplasm. The catalysed reaction is D-arabinose 5-phosphate + phosphoenolpyruvate + H2O = 3-deoxy-alpha-D-manno-2-octulosonate-8-phosphate + phosphate. Its pathway is carbohydrate biosynthesis; 3-deoxy-D-manno-octulosonate biosynthesis; 3-deoxy-D-manno-octulosonate from D-ribulose 5-phosphate: step 2/3. It functions in the pathway bacterial outer membrane biogenesis; lipopolysaccharide biosynthesis. The sequence is that of 2-dehydro-3-deoxyphosphooctonate aldolase from Acinetobacter baumannii (strain AB307-0294).